Here is a 203-residue protein sequence, read N- to C-terminus: Ribosome maturation factor RimP (203 aa).

The interval 184–203 (RRGSAPVEDEEGEGEAPTAH) is disordered.

It belongs to the RimP family.

It localises to the cytoplasm. In terms of biological role, required for maturation of 30S ribosomal subunits. In Methylobacterium nodulans (strain LMG 21967 / CNCM I-2342 / ORS 2060), this protein is Ribosome maturation factor RimP.